Here is a 246-residue protein sequence, read N- to C-terminus: E3 ubiquitin ligase TRIM40 (246 aa).

The segment at 12 to 55 adopts an RING-type zinc-finger fold; the sequence is CPICLDPLKEAVSTDCRHLFCRMCLTQHMDKASVSGILSCPVCR. A B box-type zinc finger spans residues 64-105; sequence GDNYICHTHQKRVRRFCEASGHLLCEECLQSPEHQSHTELSI. Residues Cys69, His72, Cys91, and His97 each coordinate Zn(2+). A coiled-coil region spans residues 105–170; it reads IENAISHYKE…DQTKEQLKAL (66 aa).

This sequence belongs to the TRIM/RBCC family. As to quaternary structure, interacts with NEDD8.

The catalysed reaction is S-ubiquitinyl-[E2 ubiquitin-conjugating enzyme]-L-cysteine + [acceptor protein]-L-lysine = [E2 ubiquitin-conjugating enzyme]-L-cysteine + N(6)-ubiquitinyl-[acceptor protein]-L-lysine.. In terms of biological role, E3 ubiquitin-protein ligase that plays a role in the limitation of the innate immune response. Mediates inhibition of the RLR signaling pathway by ubiquitinating RIGI and IFIH1 receptors, leading to their proteasomal degradation. Also promotes the neddylation of IKBKG/NEMO, stabilizing NFKBIA, and thereby inhibiting of NF-kappa-B nuclear translocation and activation. This is E3 ubiquitin ligase TRIM40 (Trim40) from Mus musculus (Mouse).